We begin with the raw amino-acid sequence, 596 residues long: MAVEELQSIIKRCQILEEHDFKEEDFGLFQLAGQRCIEDGYINQLLEIIQDEKNKTIIKSMGWNLVGPVVRCLLRGREEDKREECFLIFDLLVKLCNPKELLLGLLELIEEPSGKQISQIILLLLQPLQTVIQKLPNNKAYSVGLALSTLWSQLSLLPVPHSEEQIQADDYGLCQCCKALIEFTKPFVEEVISDKENKENAKLKDELLKFCFKGLKCPLLTAQFLEQSEDVGNDPFRCFASEIIGFLSKIGHPVPQIILNHGRKKRTWDYLEFEEEEDKQLAESVASLTYLVFVQGIGIDQLPMVLSPSYLLQLNMEHIEVFLQRTEQSIYSKGLELLETSLLRLEDNSLCYQYLEIKSFLAVPQGLVKVMTLCPIETLRKKGLSMLQLFIDKLDSQGKYTLFRCLLNTSNHSGVEAFVIQNIKNQIDLSFKKTYNKWFAGAQLISLLDLVLSLPEGAETDLLQNSDRIMASLNLLRYLVIKDNEDDNQTGLWTELGKIENNFLKPLHIGLNMSKAHYEAEIKNSQQNNQVASMCKGVCSVTVGGEEIPSMPPEMQLKVLHSALFTFDLIESVLARVEELIEIKSKSTSEENVGIK.

Ala2 is subject to N-acetylalanine. An alpha-helical region with structural similarity to HEAT repeats region spans residues 2-555 (AVEELQSIIK…EEIPSMPPEM (554 aa)). An important for interaction with RBX1 region spans residues 299 to 596 (IDQLPMVLSP…STSEENVGIK (298 aa)).

Interacts with FKBP4 and FKBP1A. Interacts with RBX1 (via RING domain). Identified in complexes that contain RBX1 plus one of the cullins CUL1, CUL2, CUL3, and CUL4A. Identified in a SCF complex composed of CUL1, RBX1, SKP1, FBXW7 and GLMN. Component of a SCF-like complex consisting of CUL7, RBX1, SKP1, FBXW8 and GLMN. Interacts with unphosphorylated MET and is released upon MET phosphorylation. Phosphorylated on tyrosine residues. In terms of tissue distribution, ubiquitous. Detected in embryonic vasculature and embryonic perichondrium, and in adult eye, brain, heart, testis, kidney, smooth muscle and skeletal muscle.

Functionally, regulatory component of cullin-RING-based SCF (SKP1-Cullin-F-box protein) E3 ubiquitin-protein ligase complexes. Inhibits E3 ubiquitin ligase activity by binding to the RING domain of RBX1 and inhibiting its interaction with the E2 ubiquitin-conjugating enzyme CDC34. Inhibits RBX1-mediated neddylation of CUL1. Required for normal stability and normal cellular levels of key components of SCF ubiquitin ligase complexes, including FBXW7, RBX1, CUL1, CUL2, CUL3, CUL4A, and thereby contributes to the regulation of CCNE1 and MYC levels. Essential for normal development of the vasculature. Contributes to the regulation of RPS6KB1 phosphorylation. This Mus musculus (Mouse) protein is Glomulin (Glmn).